A 283-amino-acid polypeptide reads, in one-letter code: Acetylglutamate kinase (283 aa).

Residues 63–64 (GG), R85, and N178 each bind substrate.

The protein belongs to the acetylglutamate kinase family. ArgB subfamily.

The protein localises to the cytoplasm. It carries out the reaction N-acetyl-L-glutamate + ATP = N-acetyl-L-glutamyl 5-phosphate + ADP. It participates in amino-acid biosynthesis; L-arginine biosynthesis; N(2)-acetyl-L-ornithine from L-glutamate: step 2/4. Its function is as follows. Catalyzes the ATP-dependent phosphorylation of N-acetyl-L-glutamate. The protein is Acetylglutamate kinase of Prochlorococcus marinus (strain MIT 9312).